The chain runs to 210 residues: MADS-box protein AGL42 (210 aa).

Residues 1-61 (MVRGKIEMKK…GRLYEFSSSD (61 aa)) form the MADS-box domain. One can recognise a K-box domain in the interval 87 to 177 (LQQLKQEASH…HQKNVINPWR (91 aa)).

As to expression, expressed in quiescent center (QC) cells of root tips. Expressed at the base of the petiole of cotyledons and leaves, in flower buds, petals, sepals and abscission zone of flowers and siliques.

It localises to the nucleus. Its function is as follows. MADS-box transcription factor that acts with AGL71 and AGL72 in the control of flowering time. Promotes flowering at the shoot apical and axillary meristems. Seems to act through a gibberellin-dependent pathway. Interacts genetically with SOC1 and its expression is directly regulated by SOC1. Plays a role in controlling flower organ senescence and abscission by repressing ethylene responses and regulating the expression of BOP2 and IDA. This Arabidopsis thaliana (Mouse-ear cress) protein is MADS-box protein AGL42 (AGL42).